A 276-amino-acid polypeptide reads, in one-letter code: Large ribosomal subunit protein uL2 (276 aa).

2 disordered regions span residues 30 to 57 and 219 to 276; these read EKSL…QGGG and TVRG…RSKK.

This sequence belongs to the universal ribosomal protein uL2 family. As to quaternary structure, part of the 50S ribosomal subunit. Forms a bridge to the 30S subunit in the 70S ribosome.

In terms of biological role, one of the primary rRNA binding proteins. Required for association of the 30S and 50S subunits to form the 70S ribosome, for tRNA binding and peptide bond formation. It has been suggested to have peptidyltransferase activity; this is somewhat controversial. Makes several contacts with the 16S rRNA in the 70S ribosome. The chain is Large ribosomal subunit protein uL2 from Exiguobacterium sibiricum (strain DSM 17290 / CCUG 55495 / CIP 109462 / JCM 13490 / 255-15).